Reading from the N-terminus, the 160-residue chain is Small ribosomal subunit protein uS7 (160 aa).

This sequence belongs to the universal ribosomal protein uS7 family. Part of the 30S ribosomal subunit. Contacts proteins S9 and S11.

In terms of biological role, one of the primary rRNA binding proteins, it binds directly to 16S rRNA where it nucleates assembly of the head domain of the 30S subunit. Is located at the subunit interface close to the decoding center, probably blocks exit of the E-site tRNA. The sequence is that of Small ribosomal subunit protein uS7 from Rickettsia akari (strain Hartford).